The chain runs to 217 residues: MRFGVVGFKGKMGKVILDVFSNDGHTPILLIDKDEIIEEDFPEVIVDFSTPDALEKTSSYCEKYNSNLVIGTTALTEKHFKILENLSKKVAVVQSYNFSIGINILLELLEKATKMLNDWDCEITEIHHSKKKDKPSGTAILLKNALNREVEIHSLRLGGIPGDHTVLFSNEGELIEIKHRAISRKVFALGALKAAKFILNKKSGFYTFKDIIKEAFI.

Residues G7–M12, G71–T73, and S95–F98 each bind NAD(+). H127 serves as the catalytic Proton donor/acceptor. Residue H128 coordinates (S)-2,3,4,5-tetrahydrodipicolinate. K131 functions as the Proton donor in the catalytic mechanism. Position 137–138 (G137–T138) interacts with (S)-2,3,4,5-tetrahydrodipicolinate.

Belongs to the DapB family.

It is found in the cytoplasm. The enzyme catalyses (S)-2,3,4,5-tetrahydrodipicolinate + NAD(+) + H2O = (2S,4S)-4-hydroxy-2,3,4,5-tetrahydrodipicolinate + NADH + H(+). The catalysed reaction is (S)-2,3,4,5-tetrahydrodipicolinate + NADP(+) + H2O = (2S,4S)-4-hydroxy-2,3,4,5-tetrahydrodipicolinate + NADPH + H(+). It functions in the pathway amino-acid biosynthesis; L-lysine biosynthesis via DAP pathway; (S)-tetrahydrodipicolinate from L-aspartate: step 4/4. In terms of biological role, catalyzes the conversion of 4-hydroxy-tetrahydrodipicolinate (HTPA) to tetrahydrodipicolinate. This is 4-hydroxy-tetrahydrodipicolinate reductase from Thermosipho africanus (strain TCF52B).